A 113-amino-acid chain; its full sequence is Large ribosomal subunit protein bL17 (113 aa).

The protein belongs to the bacterial ribosomal protein bL17 family. In terms of assembly, part of the 50S ribosomal subunit. Contacts protein L32.

This chain is Large ribosomal subunit protein bL17, found in Clostridium botulinum (strain ATCC 19397 / Type A).